The sequence spans 94 residues: MVYISNGQALDSRSQSPWRLSFITDFFWGIAEFVVLFFRTLLQQDVKKRRGYGGSSDSRYDDGRGPPGNPPRRMGRINHLRGPNPPPMAGGUGR.

Residues 20-42 (LSFITDFFWGIAEFVVLFFRTLL) traverse the membrane as a helical segment. The disordered stretch occupies residues 48-94 (KRRGYGGSSDSRYDDGRGPPGNPPRRMGRINHLRGPNPPPMAGGUGR). Selenocysteine 92 is a non-standard amino acid (selenocysteine).

The protein belongs to the selenoprotein K family. As to quaternary structure, interacts with DERL1, DERL2, DERL3 and SELENOS. The SELENOK-SELENOS complex interacts with VCP. Interacts with ZDHHC6. In terms of processing, cleaved by CAPN2/m-calpain in resting macrophages but not in activated macrophages. Macrophage activation up-regulates expression of the calpain inhibitor CAST/calpastatin, resulting in inhibition of CAPN2 activity. Post-translationally, truncated SELENOK proteins produced by failed UGA/Sec decoding are ubiquitinated by the CRL2(KLHDC2) complex, which recognizes the diglycine (Gly-Gly) at the C-terminus of truncated SELENOK proteins.

It localises to the endoplasmic reticulum membrane. The protein resides in the cell membrane. Required for Ca(2+) flux in immune cells and plays a role in T-cell proliferation and in T-cell and neutrophil migration. Involved in endoplasmic reticulum-associated degradation (ERAD) of soluble glycosylated proteins. Required for palmitoylation and cell surface expression of CD36 and involved in macrophage uptake of low-density lipoprotein and in foam cell formation. Together with ZDHHC6, required for palmitoylation of ITPR1 in immune cells, leading to regulate ITPR1 stability and function. Plays a role in protection of cells from ER stress-induced apoptosis. Protects cells from oxidative stress when overexpressed in cardiomyocytes. This Sus scrofa (Pig) protein is Selenoprotein K.